Here is a 286-residue protein sequence, read N- to C-terminus: Phosphoribosylaminoimidazole-succinocarboxamide synthase (286 aa).

It belongs to the SAICAR synthetase family.

It catalyses the reaction 5-amino-1-(5-phospho-D-ribosyl)imidazole-4-carboxylate + L-aspartate + ATP = (2S)-2-[5-amino-1-(5-phospho-beta-D-ribosyl)imidazole-4-carboxamido]succinate + ADP + phosphate + 2 H(+). It participates in purine metabolism; IMP biosynthesis via de novo pathway; 5-amino-1-(5-phospho-D-ribosyl)imidazole-4-carboxamide from 5-amino-1-(5-phospho-D-ribosyl)imidazole-4-carboxylate: step 1/2. The chain is Phosphoribosylaminoimidazole-succinocarboxamide synthase from Mannheimia succiniciproducens (strain KCTC 0769BP / MBEL55E).